A 336-amino-acid chain; its full sequence is 3-isopropylmalate dehydrogenase (336 aa).

Positions 87, 97, 121, and 211 each coordinate substrate. Residues aspartate 211, aspartate 235, and aspartate 239 each coordinate Mg(2+). An NAD(+)-binding site is contributed by 271–283; sequence GSAPDIAGQGIAD.

The protein belongs to the isocitrate and isopropylmalate dehydrogenases family. LeuB type 2 subfamily. As to quaternary structure, homodimer. It depends on Mg(2+) as a cofactor. Mn(2+) serves as cofactor.

Its subcellular location is the cytoplasm. The catalysed reaction is (2R,3S)-3-isopropylmalate + NAD(+) = 4-methyl-2-oxopentanoate + CO2 + NADH. The protein operates within amino-acid biosynthesis; L-leucine biosynthesis; L-leucine from 3-methyl-2-oxobutanoate: step 3/4. In terms of biological role, catalyzes the oxidation of 3-carboxy-2-hydroxy-4-methylpentanoate (3-isopropylmalate) to 3-carboxy-4-methyl-2-oxopentanoate. The product decarboxylates to 4-methyl-2 oxopentanoate. The protein is 3-isopropylmalate dehydrogenase of Mycolicibacterium gilvum (strain PYR-GCK) (Mycobacterium gilvum (strain PYR-GCK)).